The sequence spans 273 residues: MPFSFFSRKKPSRRFNDFYEDWSKTLTENCLPLLRQSLSSAASASVLSSNVDLVLRHLVLYYETLDLAADHNTIPYLLFPSWRNSLETPFLFLGDIHPYLLTNLLRSFIDRENQDSDDEDEETSLDLVNQPLKMTMAWKDPSDELVKRIDQIECTMRLMVPGLMDRMRKTQRSFVARVSESWVSSYQVGKKKKLTATVATASTSVDEAAKIEMEELVSIFVDANRLRKSVIMDIVGATSEHQAALFLEGLCQFLAGFKDQILLQDFEILSLPN.

One can recognise a DOG1 domain in the interval 12–267 (SRRFNDFYED…KDQILLQDFE (256 aa)).

Expressed only in anthers and in pollen. Not detected in other flower tissues, stems, leaves and siliques.

The protein localises to the cytoplasm. Functionally, required for the formation of pollen surface apertures, which arise by restriction of exine deposition at specific sites. The aperture length depends on the INP1 dosage. Does not play a role in specifying the number or position of apertures. Acts in a sporophytic manner. The protein is Protein INAPERTURATE POLLEN1 of Arabidopsis thaliana (Mouse-ear cress).